A 372-amino-acid polypeptide reads, in one-letter code: Cytochrome b (372 aa).

Transmembrane regions (helical) follow at residues 25-45 (FGSMLLTCLAMQTLTGFFLAI), 69-90 (WTMQNLHAIGASMFFICIYIHI), 105-125 (WLSGITLLITLMATAFFGYVL), and 170-190 (FFALHFILPFIIISLTSIHII). Residues histidine 75 and histidine 89 each contribute to the heme b site. Residues histidine 174 and histidine 188 each contribute to the heme b site. Histidine 193 lines the a ubiquinone pocket. Transmembrane regions (helical) follow at residues 218-238 (YKDMLMVTTMITLLFLILSFS), 280-300 (LGGTLALLMSIAILMTTPFTH), 312-332 (LTQILFWTLVATFITLTWTAT), and 339-358 (FIIISQMTSIFYFFFFIMNP).

This sequence belongs to the cytochrome b family. As to quaternary structure, the cytochrome bc1 complex contains 3 respiratory subunits (MT-CYB, CYC1 and UQCRFS1), 2 core proteins (UQCRC1 and UQCRC2) and probably 6 low-molecular weight proteins. Requires heme b as cofactor.

Its subcellular location is the mitochondrion inner membrane. Its function is as follows. Component of the ubiquinol-cytochrome c reductase complex (complex III or cytochrome b-c1 complex) that is part of the mitochondrial respiratory chain. The b-c1 complex mediates electron transfer from ubiquinol to cytochrome c. Contributes to the generation of a proton gradient across the mitochondrial membrane that is then used for ATP synthesis. The chain is Cytochrome b (MT-CYB) from Ophiophagus hannah (King cobra).